A 153-amino-acid polypeptide reads, in one-letter code: Endoribonuclease YbeY (153 aa).

Residues His116, His120, and His126 each contribute to the Zn(2+) site.

It belongs to the endoribonuclease YbeY family. Zn(2+) serves as cofactor.

The protein localises to the cytoplasm. In terms of biological role, single strand-specific metallo-endoribonuclease involved in late-stage 70S ribosome quality control and in maturation of the 3' terminus of the 16S rRNA. In Clavibacter sepedonicus (Clavibacter michiganensis subsp. sepedonicus), this protein is Endoribonuclease YbeY.